Consider the following 149-residue polypeptide: Protein-export protein SecB (149 aa).

Belongs to the SecB family. Homotetramer, a dimer of dimers. One homotetramer interacts with 1 SecA dimer.

It is found in the cytoplasm. One of the proteins required for the normal export of preproteins out of the cell cytoplasm. It is a molecular chaperone that binds to a subset of precursor proteins, maintaining them in a translocation-competent state. It also specifically binds to its receptor SecA. This chain is Protein-export protein SecB, found in Acidithiobacillus ferrooxidans (strain ATCC 23270 / DSM 14882 / CIP 104768 / NCIMB 8455) (Ferrobacillus ferrooxidans (strain ATCC 23270)).